The following is a 205-amino-acid chain: MKLDVIKLDGTKAGNIDLDEALFGLEPRADILHRVVRWQRNNAQAGTHKVLTKSEVSYSTKKIYRQKGTGGARHGSRKSPTFRHGGVYKGPTPRSHGHDLTKKFRKLGLRHALSAKAKAGELVVIENAEAEGKTAALAKQVANLGWKRALVIDGAAVNEGFARAARNIEGLDILPSMGANVYDILKRDTLVLTKAAVEALEARLK.

A disordered region spans residues 65-99 (RQKGTGGARHGSRKSPTFRHGGVYKGPTPRSHGHD).

Belongs to the universal ribosomal protein uL4 family. As to quaternary structure, part of the 50S ribosomal subunit.

Its function is as follows. One of the primary rRNA binding proteins, this protein initially binds near the 5'-end of the 23S rRNA. It is important during the early stages of 50S assembly. It makes multiple contacts with different domains of the 23S rRNA in the assembled 50S subunit and ribosome. Forms part of the polypeptide exit tunnel. The chain is Large ribosomal subunit protein uL4 from Ruegeria pomeroyi (strain ATCC 700808 / DSM 15171 / DSS-3) (Silicibacter pomeroyi).